Reading from the N-terminus, the 334-residue chain is 4-hydroxy-3-methylbut-2-enyl diphosphate reductase (334 aa).

Residue Cys-19 participates in [4Fe-4S] cluster binding. Residues His-48 and His-84 each contribute to the (2E)-4-hydroxy-3-methylbut-2-enyl diphosphate site. Dimethylallyl diphosphate contacts are provided by His-48 and His-84. The isopentenyl diphosphate site is built by His-48 and His-84. Cys-106 provides a ligand contact to [4Fe-4S] cluster. A (2E)-4-hydroxy-3-methylbut-2-enyl diphosphate-binding site is contributed by His-134. His-134 contributes to the dimethylallyl diphosphate binding site. His-134 is an isopentenyl diphosphate binding site. Glu-136 (proton donor) is an active-site residue. Thr-175 lines the (2E)-4-hydroxy-3-methylbut-2-enyl diphosphate pocket. Residue Cys-205 coordinates [4Fe-4S] cluster. (2E)-4-hydroxy-3-methylbut-2-enyl diphosphate contacts are provided by Ser-233, Ser-234, Asn-235, and Ser-278. Positions 233, 234, 235, and 278 each coordinate dimethylallyl diphosphate. Isopentenyl diphosphate is bound by residues Ser-233, Ser-234, Asn-235, and Ser-278.

It belongs to the IspH family. The cofactor is [4Fe-4S] cluster.

It catalyses the reaction isopentenyl diphosphate + 2 oxidized [2Fe-2S]-[ferredoxin] + H2O = (2E)-4-hydroxy-3-methylbut-2-enyl diphosphate + 2 reduced [2Fe-2S]-[ferredoxin] + 2 H(+). The enzyme catalyses dimethylallyl diphosphate + 2 oxidized [2Fe-2S]-[ferredoxin] + H2O = (2E)-4-hydroxy-3-methylbut-2-enyl diphosphate + 2 reduced [2Fe-2S]-[ferredoxin] + 2 H(+). The protein operates within isoprenoid biosynthesis; dimethylallyl diphosphate biosynthesis; dimethylallyl diphosphate from (2E)-4-hydroxy-3-methylbutenyl diphosphate: step 1/1. Its pathway is isoprenoid biosynthesis; isopentenyl diphosphate biosynthesis via DXP pathway; isopentenyl diphosphate from 1-deoxy-D-xylulose 5-phosphate: step 6/6. In terms of biological role, catalyzes the conversion of 1-hydroxy-2-methyl-2-(E)-butenyl 4-diphosphate (HMBPP) into a mixture of isopentenyl diphosphate (IPP) and dimethylallyl diphosphate (DMAPP). Acts in the terminal step of the DOXP/MEP pathway for isoprenoid precursor biosynthesis. This chain is 4-hydroxy-3-methylbut-2-enyl diphosphate reductase, found in Chelativorans sp. (strain BNC1).